The sequence spans 510 residues: Secreted RxLR effector protein 24 (510 aa).

Residues 1 to 18 form the signal peptide; that stretch reads MRGAFYVAIALLGSHTAA. A RxLR-dEER motif is present at residues 47-68; sequence RVLRERRDSKDKLTVHAGAEER.

The protein belongs to the RxLR effector family.

Its subcellular location is the secreted. The protein resides in the host nucleus. Secreted effector that acts as an elicitor that induces cell death in host plant cells. This is Secreted RxLR effector protein 24 from Plasmopara viticola (Downy mildew of grapevine).